A 146-amino-acid chain; its full sequence is Transcriptional regulator AdcR (146 aa).

The HTH marR-type domain maps to 1–143; that stretch reads MRQLAKDINA…IQRFLTALVG (143 aa). Residues Glu-24, Cys-30, Glu-41, and His-42 each coordinate Zn(2+). Residues 54–77 constitute a DNA-binding region (H-T-H motif); it reads NSELARRLNVSQAAVTKAIKSLVK. Residues Glu-107, His-108, and His-112 each coordinate Zn(2+).

Homodimer.

Its activity is regulated as follows. Zinc acts as a coregulator and is required for DNA-binding activity. Its function is as follows. Zinc-responsive regulator that acts both as a repressor and as an activator by regulating directly the promoters of its target genes. In the presence of zinc, directly represses the expression of the adcRCBA operon, of genes coding for a group of surface antigen zinc-binding pneumococcal histidine triad proteins (PhtA, PhtB, PhtD and PhtE), and of adcAII. Can also activate expression of adh. In Streptococcus pneumoniae serotype 2 (strain D39 / NCTC 7466), this protein is Transcriptional regulator AdcR (adcR).